The primary structure comprises 520 residues: Pantetheine hydrolase VNN2 (520 aa).

Positions 1-22 are cleaved as a signal peptide; the sequence is MVTSSFPISVAVFALITLQVGT. The region spanning 31 to 306 is the CN hydrolase domain; the sequence is YEHAVILPNK…GKLLLSEVDS (276 aa). An N-linked (GlcNAc...) asparagine glycan is attached at Asn39. The Proton acceptor role is filled by Glu80. Lys179 functions as the Proton donor in the catalytic mechanism. Cys211 serves as the catalytic Nucleophile. 5 N-linked (GlcNAc...) asparagine glycosylation sites follow: Asn273, Asn347, Asn357, Asn411, and Asn468. Cys493 carries the GPI-anchor amidated cysteine lipid modification. A propeptide spans 494–520 (removed in mature form); sequence GTSNSAITYLLIFILLMIIALQNIVML.

This sequence belongs to the carbon-nitrogen hydrolase superfamily. BTD/VNN family. Widely expressed with higher expression in spleen and blood.

Its subcellular location is the cell membrane. The enzyme catalyses (R)-pantetheine + H2O = cysteamine + (R)-pantothenate. Amidohydrolase that hydrolyzes specifically one of the carboamide linkages in D-pantetheine thus recycling pantothenic acid (vitamin B5) and releasing cysteamine. Involved in the thymus homing of bone marrow cells. May regulate beta-2 integrin-mediated cell adhesion, migration and motility of neutrophil. The sequence is that of Pantetheine hydrolase VNN2 from Homo sapiens (Human).